A 278-amino-acid chain; its full sequence is Shikimate dehydrogenase (NADP(+)) (278 aa).

Residues 18–20 and threonine 65 contribute to the shikimate site; that span reads SRS. The active-site Proton acceptor is the lysine 69. Glutamate 80 contacts NADP(+). Shikimate-binding residues include asparagine 89 and aspartate 104. Residues 129-133 and leucine 218 contribute to the NADP(+) site; that span reads GAGGS. Residue tyrosine 220 coordinates shikimate. Glycine 241 serves as a coordination point for NADP(+).

This sequence belongs to the shikimate dehydrogenase family. In terms of assembly, homodimer.

It catalyses the reaction shikimate + NADP(+) = 3-dehydroshikimate + NADPH + H(+). Its pathway is metabolic intermediate biosynthesis; chorismate biosynthesis; chorismate from D-erythrose 4-phosphate and phosphoenolpyruvate: step 4/7. Functionally, involved in the biosynthesis of the chorismate, which leads to the biosynthesis of aromatic amino acids. Catalyzes the reversible NADPH linked reduction of 3-dehydroshikimate (DHSA) to yield shikimate (SA). The polypeptide is Shikimate dehydrogenase (NADP(+)) (Rhodopseudomonas palustris (strain TIE-1)).